Consider the following 753-residue polypeptide: Nigerose phosphorylase (753 aa).

348 to 349 (WD) contributes to the substrate binding site. Glu-490 (proton donor) is an active-site residue. Residue 604-605 (KQ) participates in substrate binding.

Belongs to the glycosyl hydrolase 65 family. As to quaternary structure, homodimer.

The protein localises to the cytoplasm. It carries out the reaction nigerose + phosphate = beta-D-glucose 1-phosphate + D-glucose. Its activity is regulated as follows. Does not require divalent metal ions. Catalyzes the reversible phosphorolysis of nigerose. Also shows a weak activity on kojibiose. This Lachnoclostridium phytofermentans (strain ATCC 700394 / DSM 18823 / ISDg) (Clostridium phytofermentans) protein is Nigerose phosphorylase.